A 226-amino-acid polypeptide reads, in one-letter code: Ribonuclease 3 (226 aa).

Residues 7–129 (LPRLCRTLGY…IIGAVYLDAD (123 aa)) enclose the RNase III domain. Position 42 (Glu-42) interacts with Mg(2+). Residue Asp-46 is part of the active site. Residues Asp-115 and Glu-118 each contribute to the Mg(2+) site. Glu-118 is a catalytic residue. A DRBM domain is found at 156–226 (DPKTILQEYL…AAQVLELLNK (71 aa)).

It belongs to the ribonuclease III family. In terms of assembly, homodimer. The cofactor is Mg(2+).

It localises to the cytoplasm. It catalyses the reaction Endonucleolytic cleavage to 5'-phosphomonoester.. Its function is as follows. Digests double-stranded RNA. Involved in the processing of primary rRNA transcript to yield the immediate precursors to the large and small rRNAs (23S and 16S). Processes some mRNAs, and tRNAs when they are encoded in the rRNA operon. Processes pre-crRNA and tracrRNA of type II CRISPR loci if present in the organism. This chain is Ribonuclease 3, found in Shewanella frigidimarina (strain NCIMB 400).